Reading from the N-terminus, the 423-residue chain is Type II methyltransferase M.BamHI (423 aa).

A compositionally biased stretch (basic and acidic residues) spans 397–414 (DFRQDHEGNSKGDKKNEN). The segment at 397 to 423 (DFRQDHEGNSKGDKKNENNDQISLSLE) is disordered.

Belongs to the N(4)/N(6)-methyltransferase family.

It catalyses the reaction a 2'-deoxycytidine in DNA + S-adenosyl-L-methionine = an N(4)-methyl-2'-deoxycytidine in DNA + S-adenosyl-L-homocysteine + H(+). A beta subtype methylase, recognizes the double-stranded sequence 5'-GGATCC-3', methylates C-5 on both strands, and protects the DNA from cleavage by the BamHI endonuclease. The chain is Type II methyltransferase M.BamHI from Bacillus amyloliquefaciens (Bacillus velezensis).